The chain runs to 439 residues: Vacuolar zinc transporter COT1 (439 aa).

At 1-9 the chain is on the cytoplasmic side; that stretch reads MKLGSKQVK. Residues 10–30 form a helical membrane-spanning segment; sequence IISLLLLDTVFFGIEITTGYL. At 31–33 the chain is on the vacuolar side; it reads SHS. Residues 34 to 54 traverse the membrane as a helical segment; that stretch reads LALIADSFHMLNDIISLVVAL. The Cytoplasmic segment spans residues 55 to 76; it reads WAVNVAKNRNPDSTYTYGWKRA. Residues 77-97 form a helical membrane-spanning segment; it reads EILGALINAVFLIALCVSILI. Residues 98-113 are Vacuolar-facing; it reads EALQRIIAPPVIENPK. A helical transmembrane segment spans residues 114 to 134; sequence FVLYVGVAGLISNTVGLFLFH. The Cytoplasmic portion of the chain corresponds to 135 to 244; sequence DNDQEHGHGH…RKRSLNMHGV (110 aa). Short sequence motifs (histidine repeat) lie at residues 140–144, 165–169, and 219–223; these read HGHGH, HTHAH, and SSHTI. A compositionally biased stretch (polar residues) spans 207–230; that stretch reads PENASKTPSYSTSSHTIASGGNYT. The tract at residues 207-231 is disordered; it reads PENASKTPSYSTSSHTIASGGNYTE. S225 is modified (phosphoserine). Residues 245–265 form a helical membrane-spanning segment; that stretch reads FLHVLGDALGNIGVMLSAFFI. Topologically, residues 266 to 274 are vacuolar; that stretch reads WKTDYSWKY. Residues 275–295 form a helical membrane-spanning segment; sequence YTDPLVSLIITGIIFSSALPL. Residues 296 to 439 are Cytoplasmic-facing; it reads SCKASKILLQ…CNTADCLEDH (144 aa). K301 participates in a covalent cross-link: Glycyl lysine isopeptide (Lys-Gly) (interchain with G-Cter in ubiquitin). Residues 388–402 show a composition bias toward basic and acidic residues; that stretch reads TSTERAGDSQGDHLQ. Residues 388–408 are disordered; it reads TSTERAGDSQGDHLQNDPLSL.

It belongs to the cation diffusion facilitator (CDF) transporter (TC 2.A.4) family. SLC30A subfamily.

It is found in the vacuole membrane. It carries out the reaction Zn(2+)(in) = Zn(2+)(out). Its function is as follows. Vacuolar transporter that regulates zinc homeostasis by mediating zinc transport and storage into the vacuole. Plays a role in resistance to zinc shock resulting from sudden influx of zinc into cytoplasm. May also participate in the regulation of cobalt levels under normal physiological conditions and may be important in the supply of metal that is required for metalloenzyme or cofactor synthesis. Involved in the resistance to cobalt and rhodium ions. This is Vacuolar zinc transporter COT1 from Saccharomyces cerevisiae (strain ATCC 204508 / S288c) (Baker's yeast).